The following is a 357-amino-acid chain: tRNA N6-adenosine threonylcarbamoyltransferase (357 aa).

The Fe cation site is built by histidine 113 and histidine 117. Residues 136–140, aspartate 169, glycine 182, and asparagine 288 contribute to the substrate site; that span reads LVSGG. Fe cation is bound at residue aspartate 316.

It belongs to the KAE1 / TsaD family. It depends on Fe(2+) as a cofactor.

It localises to the cytoplasm. The catalysed reaction is L-threonylcarbamoyladenylate + adenosine(37) in tRNA = N(6)-L-threonylcarbamoyladenosine(37) in tRNA + AMP + H(+). In terms of biological role, required for the formation of a threonylcarbamoyl group on adenosine at position 37 (t(6)A37) in tRNAs that read codons beginning with adenine. Is involved in the transfer of the threonylcarbamoyl moiety of threonylcarbamoyl-AMP (TC-AMP) to the N6 group of A37, together with TsaE and TsaB. TsaD likely plays a direct catalytic role in this reaction. The polypeptide is tRNA N6-adenosine threonylcarbamoyltransferase (Gemmatimonas aurantiaca (strain DSM 14586 / JCM 11422 / NBRC 100505 / T-27)).